Consider the following 1119-residue polypeptide: Solute carrier family 38 member 10 (1119 aa).

10 helical membrane passes run 4 to 24 (AAASNWGLITNIVNSIVGVSV), 36 to 58 (IVLGALLLVFCSWMTHQSCMFLV), 84 to 104 (LVETSMIGLMLGTCIAFYVVI), 120 to 140 (VGGTFRMFLLFAVSLCIVLPL), 153 to 173 (FSAMALLFYTVFMFVIVLSSL), 229 to 249 (IFASSLNVVTTFYVMVGFFGY), 272 to 292 (MLRVGFMMSVAVGFPMMILPC), 323 to 343 (ALTLSVVFGTMVGGILIPNVE), 345 to 365 (ILGLTGATMGSLICFICPALI), and 378 to 398 (VVLWVGLGVLVVSTVTTLSVS). Disordered regions lie at residues 438 to 691 (AEDG…EEAG) and 731 to 1071 (KEIH…DGVI). Basic and acidic residues-rich tracts occupy residues 439-454 (EDGREKPKLPKEREEL), 466-475 (PGREDGKEAP), 493-522 (EAHRHEPPVPHDKVVVDEGQDREVPEENKP), 544-559 (DSEREKQEPEQGEVGK), and 592-603 (AKEDLGPGDRGL). The residue at position 612 (S612) is a Phosphoserine. Over residues 652-667 (PPLPAEKPAPGPGLPP) the composition is skewed to pro residues. Composition is skewed to basic and acidic residues over residues 668–677 (EPREQRDVER), 731–752 (KEIHQQRQEDEEDKPRQVEVHQ), and 763–773 (EAPEGKARETV). Position 772 is a phosphothreonine (T772). Phosphoserine is present on S802. Composition is skewed to basic and acidic residues over residues 832 to 841 (KLRDGQKDAA) and 863 to 876 (PAREAGGPEERLAE). Over residues 880–889 (GQSQDVTGGS) the composition is skewed to polar residues. Residues S889, S965, and S997 each carry the phosphoserine modification. Composition is skewed to basic and acidic residues over residues 975-1005 (HRLDHGGHLEMRKARGGDHVPVSHEQPRGGE), 1012-1022 (PRQRPEPELGL), and 1033-1042 (DNAKPNRDLK).

The protein belongs to the amino acid/polyamine transporter 2 family.

The protein resides in the membrane. The enzyme catalyses L-glutamate(out) = L-glutamate(in). The catalysed reaction is L-glutamine(out) = L-glutamine(in). It carries out the reaction L-alanine(in) = L-alanine(out). It catalyses the reaction L-serine(in) = L-serine(out). The enzyme catalyses L-leucine(in) = L-leucine(out). Facilitates bidirectional transport of amino acids. May act as a glutamate sensor that regulates glutamate-glutamine cycle and mTOR signaling in the brain. The transport mechanism remains to be elucidated. The protein is Solute carrier family 38 member 10 of Homo sapiens (Human).